The chain runs to 223 residues: Ribonuclease 3 (223 aa).

The RNase III domain maps to Leu3–Gly125. Residue Glu38 coordinates Mg(2+). The active site involves Asp42. The Mg(2+) site is built by Asp111 and Glu114. Residue Glu114 is part of the active site. The region spanning Asp152–Ile222 is the DRBM domain.

It belongs to the ribonuclease III family. In terms of assembly, homodimer. Mg(2+) is required as a cofactor.

It is found in the cytoplasm. The catalysed reaction is Endonucleolytic cleavage to 5'-phosphomonoester.. Its function is as follows. Digests double-stranded RNA. Involved in the processing of primary rRNA transcript to yield the immediate precursors to the large and small rRNAs (23S and 16S). Processes some mRNAs, and tRNAs when they are encoded in the rRNA operon. Processes pre-crRNA and tracrRNA of type II CRISPR loci if present in the organism. This Histophilus somni (strain 2336) (Haemophilus somnus) protein is Ribonuclease 3.